Here is a 2289-residue protein sequence, read N- to C-terminus: Protein Ycf2 (2289 aa).

Gly1643–Ser1650 lines the ATP pocket.

The protein belongs to the Ycf2 family.

The protein localises to the plastid. It is found in the chloroplast stroma. Its function is as follows. Probable ATPase of unknown function. Its presence in a non-photosynthetic plant (Epifagus virginiana) and experiments in tobacco indicate that it has an essential function which is probably not related to photosynthesis. The polypeptide is Protein Ycf2 (Capsella bursa-pastoris (Shepherd's purse)).